The primary structure comprises 718 residues: Sec-independent protein translocase protein TatCt (718 aa).

A run of 8 helical transmembrane segments spans residues 34–54, 84–104, 137–157, 178–198, 214–231, 234–254, 280–300, and 325–345; these read VFIV…LYVW, ILLQ…PPFI, LFAA…FAFL, FIFL…AMTG, WRHA…FTPP, FTQI…LYLA, LAGV…YGGV, and LGAF…AYLV. The interval 421-451 is disordered; the sequence is REAEAADAEDEPGELEDRTTRAGGAFVSELT. The span at 425–434 shows a compositional bias: acidic residues; the sequence is AADAEDEPGE. 6 consecutive transmembrane segments (helical) span residues 478–498, 539–559, 572–592, 621–641, 661–681, and 682–702; these read AFWV…WLYT, FSTI…VWPA, TVFV…ALGY, FFWL…VPIL, EVTV…ITTM, and FMVT…LFVL.

This sequence belongs to the TatC family. Forms a complex with TatA.

The protein localises to the cell membrane. Functionally, part of the twin-arginine translocation (Tat) system that transports large folded proteins containing a characteristic twin-arginine motif in their signal peptide across membranes. The protein is Sec-independent protein translocase protein TatCt of Haloferax volcanii (strain ATCC 29605 / DSM 3757 / JCM 8879 / NBRC 14742 / NCIMB 2012 / VKM B-1768 / DS2) (Halobacterium volcanii).